Reading from the N-terminus, the 274-residue chain is Large ribosomal subunit protein uL2 (274 aa).

The disordered stretch occupies residues 224-274 (VMNPVDHPHGGGEGRSPIGRNPVTPWGKPALGARTRKKKPGDRLIVKRRAR). Over residues 257-274 (RTRKKKPGDRLIVKRRAR) the composition is skewed to basic residues.

This sequence belongs to the universal ribosomal protein uL2 family. As to quaternary structure, part of the 50S ribosomal subunit. Forms a bridge to the 30S subunit in the 70S ribosome.

Functionally, one of the primary rRNA binding proteins. Required for association of the 30S and 50S subunits to form the 70S ribosome, for tRNA binding and peptide bond formation. It has been suggested to have peptidyltransferase activity; this is somewhat controversial. Makes several contacts with the 16S rRNA in the 70S ribosome. This is Large ribosomal subunit protein uL2 from Pelotomaculum thermopropionicum (strain DSM 13744 / JCM 10971 / SI).